The following is a 162-amino-acid chain: Transcription elongation factor GreA (162 aa).

Positions 45–74 (ENAEYEAAREKQAFIEGRIKELEDMTARAE) form a coiled coil.

This sequence belongs to the GreA/GreB family.

In terms of biological role, necessary for efficient RNA polymerase transcription elongation past template-encoded arresting sites. The arresting sites in DNA have the property of trapping a certain fraction of elongating RNA polymerases that pass through, resulting in locked ternary complexes. Cleavage of the nascent transcript by cleavage factors such as GreA or GreB allows the resumption of elongation from the new 3'terminus. GreA releases sequences of 2 to 3 nucleotides. This Rickettsia conorii (strain ATCC VR-613 / Malish 7) protein is Transcription elongation factor GreA.